Consider the following 463-residue polypeptide: Glycine--tRNA ligase (463 aa).

The substrate site is built by arginine 100 and glutamate 175. ATP contacts are provided by residues 207 to 209, 217 to 222, 291 to 292, and 335 to 338; these read RNE, FRTREF, EL, and GADR. Residue 222–226 coordinates substrate; sequence FEQME. 331–335 lines the substrate pocket; the sequence is EPSLG.

It belongs to the class-II aminoacyl-tRNA synthetase family. As to quaternary structure, homodimer.

It localises to the cytoplasm. The catalysed reaction is tRNA(Gly) + glycine + ATP = glycyl-tRNA(Gly) + AMP + diphosphate. Its function is as follows. Catalyzes the attachment of glycine to tRNA(Gly). The protein is Glycine--tRNA ligase of Clostridium tetani (strain Massachusetts / E88).